The chain runs to 444 residues: ATP-dependent protease ATPase subunit HslU (444 aa).

Residues Ile20 and 62–67 contribute to the ATP site; that span reads GVGKTE. The interval 130 to 158 is disordered; that stretch reads EDRILDALVPPPRGASGEPERGEDNSARQ. 3 residues coordinate ATP: Asp257, Glu322, and Arg394.

Belongs to the ClpX chaperone family. HslU subfamily. A double ring-shaped homohexamer of HslV is capped on each side by a ring-shaped HslU homohexamer. The assembly of the HslU/HslV complex is dependent on binding of ATP.

It is found in the cytoplasm. Functionally, ATPase subunit of a proteasome-like degradation complex; this subunit has chaperone activity. The binding of ATP and its subsequent hydrolysis by HslU are essential for unfolding of protein substrates subsequently hydrolyzed by HslV. HslU recognizes the N-terminal part of its protein substrates and unfolds these before they are guided to HslV for hydrolysis. The chain is ATP-dependent protease ATPase subunit HslU from Bordetella bronchiseptica (strain ATCC BAA-588 / NCTC 13252 / RB50) (Alcaligenes bronchisepticus).